Reading from the N-terminus, the 41-residue chain is Large ribosomal subunit protein bL36 (41 aa).

Belongs to the bacterial ribosomal protein bL36 family.

This Jannaschia sp. (strain CCS1) protein is Large ribosomal subunit protein bL36.